The chain runs to 620 residues: 1-deoxy-D-xylulose-5-phosphate synthase (620 aa).

Residues His80 and 121–123 (GHS) contribute to the thiamine diphosphate site. Asp152 is a binding site for Mg(2+). Thiamine diphosphate-binding positions include 153–154 (GA), Asn181, Tyr288, and Glu370. Position 181 (Asn181) interacts with Mg(2+).

It belongs to the transketolase family. DXPS subfamily. As to quaternary structure, homodimer. Mg(2+) serves as cofactor. The cofactor is thiamine diphosphate.

The catalysed reaction is D-glyceraldehyde 3-phosphate + pyruvate + H(+) = 1-deoxy-D-xylulose 5-phosphate + CO2. It participates in metabolic intermediate biosynthesis; 1-deoxy-D-xylulose 5-phosphate biosynthesis; 1-deoxy-D-xylulose 5-phosphate from D-glyceraldehyde 3-phosphate and pyruvate: step 1/1. Catalyzes the acyloin condensation reaction between C atoms 2 and 3 of pyruvate and glyceraldehyde 3-phosphate to yield 1-deoxy-D-xylulose-5-phosphate (DXP). This chain is 1-deoxy-D-xylulose-5-phosphate synthase, found in Escherichia coli (strain K12 / MC4100 / BW2952).